The primary structure comprises 220 residues: Small ribosomal subunit protein uS3 (220 aa).

Residues 43-111 (IRSYLTKTLD…QVQLNILEVK (69 aa)) enclose the KH type-2 domain.

This sequence belongs to the universal ribosomal protein uS3 family. As to quaternary structure, part of the 30S ribosomal subunit. Forms a tight complex with proteins S10 and S14.

Functionally, binds the lower part of the 30S subunit head. Binds mRNA in the 70S ribosome, positioning it for translation. This chain is Small ribosomal subunit protein uS3, found in Tropheryma whipplei (strain TW08/27) (Whipple's bacillus).